A 33-amino-acid polypeptide reads, in one-letter code: Brevinin-2CDYb (33 aa).

C27 and C33 are disulfide-bonded.

Belongs to the frog skin active peptide (FSAP) family. Brevinin subfamily. As to expression, expressed by the skin glands.

It localises to the secreted. Its function is as follows. Antimicrobial peptide. This is Brevinin-2CDYb from Rana dybowskii (Dybovsky's frog).